The sequence spans 161 residues: Allophycocyanin beta chain (161 aa).

Position 71 is an N4-methylasparagine (N71). C81 is a (2R,3E)-phycocyanobilin binding site.

The protein belongs to the phycobiliprotein family. Heterodimer of an alpha and a beta chain. Post-translationally, contains one covalently linked phycocyanobilin chromophore.

It is found in the plastid. It localises to the chloroplast thylakoid membrane. Its function is as follows. Light-harvesting photosynthetic bile pigment-protein from the phycobiliprotein complex. Allophycocyanin has a maximum absorption at approximately 650 nanometers. The sequence is that of Allophycocyanin beta chain (apcB) from Cyanidium caldarium (Red alga).